We begin with the raw amino-acid sequence, 578 residues long: Acyl-coenzyme A synthetase ACSM5, mitochondrial (578 aa).

A mitochondrion-targeting transit peptide spans 1 to 22 (MRLWLRGLVYQARRSSWGVFRI). K96 is subject to N6-acetyllysine; alternate. An N6-succinyllysine; alternate modification is found at K96. An N6-acetyllysine modification is found at K151. 229–237 (TSGTTGTPK) is an ATP binding site. Position 335 is an N6-acetyllysine (K335). ATP is bound by residues 367–372 (EGYGQS), D454, R469, and K565.

The protein belongs to the ATP-dependent AMP-binding enzyme family. Mg(2+) serves as cofactor. The cofactor is Mn(2+).

The protein localises to the mitochondrion matrix. It catalyses the reaction a medium-chain fatty acid + ATP + CoA = a medium-chain fatty acyl-CoA + AMP + diphosphate. Functionally, catalyzes the activation of fatty acids by CoA to produce an acyl-CoA, the first step in fatty acid metabolism. This chain is Acyl-coenzyme A synthetase ACSM5, mitochondrial (Acsm5), found in Rattus norvegicus (Rat).